Reading from the N-terminus, the 677-residue chain is Probable potassium transport system protein Kup (677 aa).

Helical transmembrane passes span 13–33 (GALIAIGIVFGDIGTSPLYTM), 54–74 (VSLVFWTLMLITTIKYVIIAL), 98–118 (WLLLPALIGGAALLADGTLTP), 137–157 (FIFPNNQTIVLFVVTVILLIV), 171–191 (IFGPVMLTWFLFIGFFGLVNI), 217–237 (TGIFILGSVFLATTGAEALYS), 249–269 (VSWIFVYTMLILNYMGQGAWI), 296–316 (IFGVVMAALAAIIASQALISG), 345–365 (MYIGTVNWLLCIIGLIIVWAF), 374–394 (AYGLSITITMLMTTLLLYQFI), 402–422 (ILAFFFVVIFGMIETVFLIAS), and 429–449 (GGYATLIIMVAILSVMMIWFY).

It belongs to the HAK/KUP transporter (TC 2.A.72) family.

It localises to the cell membrane. It carries out the reaction K(+)(in) + H(+)(in) = K(+)(out) + H(+)(out). In terms of biological role, transport of potassium into the cell. Likely operates as a K(+):H(+) symporter. The sequence is that of Probable potassium transport system protein Kup from Leuconostoc mesenteroides subsp. mesenteroides (strain ATCC 8293 / DSM 20343 / BCRC 11652 / CCM 1803 / JCM 6124 / NCDO 523 / NBRC 100496 / NCIMB 8023 / NCTC 12954 / NRRL B-1118 / 37Y).